The following is a 428-amino-acid chain: Enolase (428 aa).

Residue Gln-162 coordinates (2R)-2-phosphoglycerate. Glu-204 functions as the Proton donor in the catalytic mechanism. The Mg(2+) site is built by Asp-241, Glu-283, and Asp-310. (2R)-2-phosphoglycerate-binding residues include Lys-335, Arg-364, Ser-365, and Lys-386. Lys-335 (proton acceptor) is an active-site residue.

This sequence belongs to the enolase family. Requires Mg(2+) as cofactor.

The protein localises to the cytoplasm. The protein resides in the secreted. Its subcellular location is the cell surface. It catalyses the reaction (2R)-2-phosphoglycerate = phosphoenolpyruvate + H2O. The protein operates within carbohydrate degradation; glycolysis; pyruvate from D-glyceraldehyde 3-phosphate: step 4/5. Functionally, catalyzes the reversible conversion of 2-phosphoglycerate (2-PG) into phosphoenolpyruvate (PEP). It is essential for the degradation of carbohydrates via glycolysis. This is Enolase from Nocardia farcinica (strain IFM 10152).